We begin with the raw amino-acid sequence, 585 residues long: Mitochondrial sodium/calcium exchanger protein (585 aa).

A signal peptide spans 1-26 (MAGRWLDPLWAPGFLCVALILETASG). The Extracellular segment spans residues 27–95 (AGDLSTKAHG…GIFCYFPPNL (69 aa)). N-linked (GlcNAc...) asparagine glycosylation occurs at N46. The chain crosses the membrane as a helical span at residues 96-116 (LPLAITLYVFWLLYLFLILGV). Over 117 to 140 (TAAKFFCPNLSAISTSLKLSHNVA) the chain is Cytoplasmic. Residues 141-161 (GVTFLAFGNGAPDIFSALVAF) form a helical membrane-spanning segment. At 162-168 (SDPRTAG) the chain is on the extracellular side. A helical membrane pass occupies residues 169 to 189 (LAIGALFGAGVLVTTVVAGGI). Residues 190–205 (TILRPFMAASRPFLRD) are Cytoplasmic-facing. The helical transmembrane segment at 206 to 226 (ITFYMVAVFLTFTALYLGRIT) threads the bilayer. A topological domain (extracellular) is located at residue L227. A helical membrane pass occupies residues 228 to 247 (VWALGYLGLYVFYVVTVIIC). At 248-325 (TWVYQRQRSR…KWRTQSISCK (78 aa)) the chain is on the cytoplasmic side. Phosphoserine; by PKA is present on S258. A helical transmembrane segment spans residues 326–346 (LLKVAKLPVEFLLLLTVPVVD). The Extracellular segment spans residues 347–360 (PDKDDRNWKRPLNC). A helical transmembrane segment spans residues 361-381 (LQLVISPLVLVLTLQSGVYGI). At 382–383 (YE) the chain is on the cytoplasmic side. The helical transmembrane segment at 384 to 404 (IGGLLPVWAVVVIVGTALASV) threads the bilayer. Residues 405 to 416 (TFFATSNSEPPR) lie on the Extracellular side of the membrane. Residues 417–437 (LHWLFAFLGFLTSALWINAAA) traverse the membrane as a helical segment. The Cytoplasmic portion of the chain corresponds to 438–445 (TEVVNILR). Residues 446-466 (SLGVVFRLSNTVLGLTLLAWG) form a helical membrane-spanning segment. Over 467-491 (NSIGDAFSDFTLARQGYPRMAFSAC) the chain is Extracellular. A helical membrane pass occupies residues 492-512 (FGGIIFNILVGVGLGCLLQIV). Over 513–525 (RSHASEVKLEPDG) the chain is Cytoplasmic. The chain crosses the membrane as a helical span at residues 526–546 (LLVWVLASALGLSLVFSLVSV). Over 547–559 (PLQCFQLSKAYGL) the chain is Extracellular. A helical transmembrane segment spans residues 560-580 (CLLLFYICFIVVVLLTEFGVI). The Cytoplasmic segment spans residues 581–585 (HLKAD).

Belongs to the Ca(2+):cation antiporter (CaCA) (TC 2.A.19) family. SLC24A subfamily. In terms of processing, phosphorylation at Ser-258 by PKA prevents calcium overload. Widely expressed. Present at higher level in pancreas, stomach, skeletal muscle and skin (at protein level). Ubiquitously expressed.

The protein localises to the mitochondrion inner membrane. The enzyme catalyses Ca(2+)(in) + 3 Na(+)(out) = Ca(2+)(out) + 3 Na(+)(in). It catalyses the reaction 3 Li(+)(out) + Ca(2+)(in) = 3 Li(+)(in) + Ca(2+)(out). Inhibited by the sodium/calcium exchanger inhibitor CGP-37157. Strongly inhibited by zinc. Its function is as follows. Mitochondrial sodium/calcium antiporter that mediates sodium-dependent calcium efflux from mitochondrion, by mediating the exchange of 3 sodium ions per 1 calcium ion. Plays a central role in mitochondrial calcium homeostasis by mediating mitochondrial calcium extrusion: calcium efflux is essential for mitochondrial function and cell survival, notably in cardiomyocytes. Regulates rates of glucose-dependent insulin secretion in pancreatic beta-cells during the first phase of insulin secretion: acts by mediating efflux of calcium from mitochondrion, thereby affecting cytoplasmic calcium responses. Required for store-operated Ca(2+) entry (SOCE) and Ca(2+) release-activated Ca(2+) (CRAC) channel regulation: sodium transport by SLC8B1 leads to promote calcium-shuttling that modulates mitochondrial redox status, thereby regulating SOCE activity. Involved in B-lymphocyte chemotaxis. Able to transport Ca(2+) in exchange of either Li(+) or Na(+), explaining how Li(+) catalyzes Ca(2+) exchange. In contrast to other members of the family its function is independent of K(+). This is Mitochondrial sodium/calcium exchanger protein from Rattus norvegicus (Rat).